Consider the following 204-residue polypeptide: uncharacterized protein (204 aa).

It is found in the mitochondrion. This is an uncharacterized protein from Arabidopsis thaliana (Mouse-ear cress).